We begin with the raw amino-acid sequence, 161 residues long: Putative acetyltransferase SAR0816 (161 aa).

This sequence belongs to the transferase hexapeptide repeat family.

This Staphylococcus aureus (strain MRSA252) protein is Putative acetyltransferase SAR0816.